Consider the following 705-residue polypeptide: Polyribonucleotide nucleotidyltransferase (705 aa).

Mg(2+) is bound by residues Asp-487 and Asp-493. The 60-residue stretch at 554–613 (PKILTMSINPDKIRDVIGPSGKQINKIIEDTGVKIDIEQDGTIFISSTDESMNQKAKKII) folds into the KH domain. Residues 623 to 691 (GQLYLGKVKR…KQGRVNLSRK (69 aa)) form the S1 motif domain.

The protein belongs to the polyribonucleotide nucleotidyltransferase family. The cofactor is Mg(2+).

It localises to the cytoplasm. The catalysed reaction is RNA(n+1) + phosphate = RNA(n) + a ribonucleoside 5'-diphosphate. In terms of biological role, involved in mRNA degradation. Catalyzes the phosphorolysis of single-stranded polyribonucleotides processively in the 3'- to 5'-direction. This chain is Polyribonucleotide nucleotidyltransferase, found in Bacillus licheniformis (strain ATCC 14580 / DSM 13 / JCM 2505 / CCUG 7422 / NBRC 12200 / NCIMB 9375 / NCTC 10341 / NRRL NRS-1264 / Gibson 46).